A 66-amino-acid polypeptide reads, in one-letter code: Large ribosomal subunit protein uL29 (66 aa).

It belongs to the universal ribosomal protein uL29 family.

This is Large ribosomal subunit protein uL29 from Thermococcus sibiricus (strain DSM 12597 / MM 739).